Consider the following 271-residue polypeptide: Tryptophan synthase alpha chain (271 aa).

Catalysis depends on proton acceptor residues Glu49 and Asp60.

The protein belongs to the TrpA family. In terms of assembly, tetramer of two alpha and two beta chains.

It catalyses the reaction (1S,2R)-1-C-(indol-3-yl)glycerol 3-phosphate + L-serine = D-glyceraldehyde 3-phosphate + L-tryptophan + H2O. It functions in the pathway amino-acid biosynthesis; L-tryptophan biosynthesis; L-tryptophan from chorismate: step 5/5. The alpha subunit is responsible for the aldol cleavage of indoleglycerol phosphate to indole and glyceraldehyde 3-phosphate. The polypeptide is Tryptophan synthase alpha chain (Burkholderia lata (strain ATCC 17760 / DSM 23089 / LMG 22485 / NCIMB 9086 / R18194 / 383)).